The sequence spans 128 residues: MMVMKRPSLRQFSWLLGGSLLLGALFWLWLAVQQQEATLAIRPVGQGIGMPDGFSVWHHLDANGIRFKSITPQKDGLLIKFDSTAQGAAAKEVLGRALPHGYIIALLEDDNSPTAWLSRLRDAPHRLG.

Over 1-11 (MMVMKRPSLRQ) the chain is Cytoplasmic. Residues 12–32 (FSWLLGGSLLLGALFWLWLAV) traverse the membrane as a helical segment. The Periplasmic segment spans residues 33 to 128 (QQQEATLAIR…RLRDAPHRLG (96 aa)).

Belongs to the MzrA family. In terms of assembly, interacts with EnvZ.

It localises to the cell inner membrane. In terms of biological role, modulates the activity of the EnvZ/OmpR two-component regulatory system, probably by directly modulating EnvZ enzymatic activity and increasing stability of phosphorylated OmpR. The chain is Modulator protein MzrA from Klebsiella pneumoniae subsp. pneumoniae (strain ATCC 700721 / MGH 78578).